Consider the following 293-residue polypeptide: Ribosomal protein L11 methyltransferase (293 aa).

S-adenosyl-L-methionine-binding residues include Thr-145, Gly-166, Asp-188, and Asn-230.

It belongs to the methyltransferase superfamily. PrmA family.

The protein resides in the cytoplasm. The enzyme catalyses L-lysyl-[protein] + 3 S-adenosyl-L-methionine = N(6),N(6),N(6)-trimethyl-L-lysyl-[protein] + 3 S-adenosyl-L-homocysteine + 3 H(+). Methylates ribosomal protein L11. This chain is Ribosomal protein L11 methyltransferase, found in Shewanella baltica (strain OS155 / ATCC BAA-1091).